Consider the following 396-residue polypeptide: Protein RepA (396 aa).

Disordered stretches follow at residues 141-170 and 356-396; these read SKEL…VTKK and NQYK…LPTT. Residues 154–168 show a composition bias toward basic and acidic residues; it reads KDSEEEPEKKPEEVT.

The sequence is that of Protein RepA (repA) from Bacillus subtilis.